Reading from the N-terminus, the 180-residue chain is Bifunctional protein PyrR (180 aa).

Residues 99–111 carry the PRPP-binding motif; that stretch reads VILVDDVLYTCRT.

The protein belongs to the purine/pyrimidine phosphoribosyltransferase family. PyrR subfamily. In terms of assembly, homodimer and homohexamer; in equilibrium.

It carries out the reaction UMP + diphosphate = 5-phospho-alpha-D-ribose 1-diphosphate + uracil. Functionally, regulates transcriptional attenuation of the pyrimidine nucleotide (pyr) operon by binding in a uridine-dependent manner to specific sites on pyr mRNA. This disrupts an antiterminator hairpin in the RNA and favors formation of a downstream transcription terminator, leading to a reduced expression of downstream genes. Also displays a weak uracil phosphoribosyltransferase activity which is not physiologically significant. The sequence is that of Bifunctional protein PyrR from Clostridium botulinum (strain Alaska E43 / Type E3).